The primary structure comprises 425 residues: Succinate--CoA ligase [ADP-forming] subunit beta, mitochondrial (425 aa).

A mitochondrion-targeting transit peptide spans 1 to 14 (NNHGLQIQQQQQRN). In terms of domain architecture, ATP-grasp spans 23–250 (MELLQEAGVS…SNSAYRQKKI (228 aa)). An N6-acetyllysine modification is found at Lys40. Position 46 is a phosphotyrosine (Tyr46). The residue at position 50 (Lys50) is an N6-acetyllysine; alternate. The residue at position 50 (Lys50) is an N6-succinyllysine; alternate. ATP-binding positions include Lys60 and 67–69 (GRG). N6-acetyllysine is present on residues Lys91, Lys101, Lys105, and Lys178. The Mg(2+) site is built by Asn220 and Asp234. Residue Ser241 is modified to Phosphoserine. A substrate-binding site is contributed by Asn285. Phosphothreonine is present on Thr303. Position 330 is an N6-acetyllysine (Lys330). Substrate is bound at residue 342–344 (GIM). At Lys400 the chain carries N6-acetyllysine.

The protein belongs to the succinate/malate CoA ligase beta subunit family. ATP-specific subunit beta subfamily. In terms of assembly, heterodimer of an alpha and a beta subunit. The beta subunit determines specificity for ATP. Interacts with ALAS2. Mg(2+) serves as cofactor.

It is found in the mitochondrion. It catalyses the reaction succinate + ATP + CoA = succinyl-CoA + ADP + phosphate. It participates in carbohydrate metabolism; tricarboxylic acid cycle; succinate from succinyl-CoA (ligase route): step 1/1. Its function is as follows. ATP-specific succinyl-CoA synthetase functions in the citric acid cycle (TCA), coupling the hydrolysis of succinyl-CoA to the synthesis of ATP and thus represents the only step of substrate-level phosphorylation in the TCA. The beta subunit provides nucleotide specificity of the enzyme and binds the substrate succinate, while the binding sites for coenzyme A and phosphate are found in the alpha subunit. The chain is Succinate--CoA ligase [ADP-forming] subunit beta, mitochondrial from Sus scrofa (Pig).